The following is a 365-amino-acid chain: MSVRRFLVWILALTVGAAPVMADRLKDLSRIKGVRNNQLVGYGLVVGLDGTGDKAPFTNQTFRNMMNQFGITLPDGVNPKLANVAAVTVSATLPAFAKAGQELDITVSSIGNADSLRGGTLLMTPLKGADGQVYAMAQGSLVVGGFGAQGQDGSRITVNVPSVGRIPNGATIEREVESPFNRGDTITFNLLRSDFTTARRVVEAINGRLGPDMAYAHDATSISVRAPRDPSQRVSFLSILENIEVDPAQEAARVVINSRTGTIVVGQNVKVSPAAITHGNLTVTIQENPEVVQPNPLAQGDTAVQQNTQIAVTEDPARMFQFGPATTLNEIVQAVNQVGAAPGDVMAVLEALKQAGALRAELIVI.

A signal peptide spans 1–22; that stretch reads MSVRRFLVWILALTVGAAPVMA.

Belongs to the FlgI family. In terms of assembly, the basal body constitutes a major portion of the flagellar organelle and consists of four rings (L,P,S, and M) mounted on a central rod.

Its subcellular location is the periplasm. It localises to the bacterial flagellum basal body. Assembles around the rod to form the L-ring and probably protects the motor/basal body from shearing forces during rotation. This is Flagellar P-ring protein from Marinobacter nauticus (strain ATCC 700491 / DSM 11845 / VT8) (Marinobacter aquaeolei).